Consider the following 316-residue polypeptide: Transaldolase (316 aa).

Catalysis depends on Lys132, which acts as the Schiff-base intermediate with substrate.

It belongs to the transaldolase family. Type 1 subfamily. In terms of assembly, homodimer.

The protein localises to the cytoplasm. The catalysed reaction is D-sedoheptulose 7-phosphate + D-glyceraldehyde 3-phosphate = D-erythrose 4-phosphate + beta-D-fructose 6-phosphate. It functions in the pathway carbohydrate degradation; pentose phosphate pathway; D-glyceraldehyde 3-phosphate and beta-D-fructose 6-phosphate from D-ribose 5-phosphate and D-xylulose 5-phosphate (non-oxidative stage): step 2/3. Functionally, transaldolase is important for the balance of metabolites in the pentose-phosphate pathway. The protein is Transaldolase of Vibrio parahaemolyticus serotype O3:K6 (strain RIMD 2210633).